Here is a 373-residue protein sequence, read N- to C-terminus: Zinc finger CCCH domain-containing protein 15 homolog (373 aa).

Positions 1 to 27 (MPPKQAQSKKTVEKEKKKKVEDKTFGL) are disordered. Over residues 10-25 (KTVEKEKKKKVEDKTF) the composition is skewed to basic and acidic residues. C3H1-type zinc fingers lie at residues 95-123 (DPKSIVCEYFKQGVTCPKGNRCKFAHDLA) and 167-205 (KPTAIICKFFLDAIESKKYGWFWECPNGGEKCAYQHCLP). Positions 252-326 (KEEKRLQKEK…ALANQINTSL (75 aa)) form a coiled coil. The interval 325–373 (SLFTDGGVLPSDDDDDDDDDDDDDEDGDDEEEDDDEEEGEYEEEEASDE) is disordered. The segment covering 335–373 (SDDDDDDDDDDDDDEDGDDEEEDDDEEEGEYEEEEASDE) has biased composition (acidic residues).

The protein belongs to the ZC3H15/TMA46 family.

The chain is Zinc finger CCCH domain-containing protein 15 homolog from Dictyostelium discoideum (Social amoeba).